The sequence spans 366 residues: tRNA-specific 2-thiouridylase MnmA (366 aa).

ATP-binding positions include 6 to 13 (AMSGGVDS) and Leu-32. The active-site Nucleophile is Cys-101. A disulfide bond links Cys-101 and Cys-199. Residue Gly-125 participates in ATP binding. The interaction with tRNA stretch occupies residues 149-151 (KDQ). Cys-199 functions as the Cysteine persulfide intermediate in the catalytic mechanism.

It belongs to the MnmA/TRMU family.

The protein resides in the cytoplasm. It carries out the reaction S-sulfanyl-L-cysteinyl-[protein] + uridine(34) in tRNA + AH2 + ATP = 2-thiouridine(34) in tRNA + L-cysteinyl-[protein] + A + AMP + diphosphate + H(+). Functionally, catalyzes the 2-thiolation of uridine at the wobble position (U34) of tRNA, leading to the formation of s(2)U34. This Corynebacterium diphtheriae (strain ATCC 700971 / NCTC 13129 / Biotype gravis) protein is tRNA-specific 2-thiouridylase MnmA.